The chain runs to 312 residues: MRVGQLLRFRSTSLRSSTARQEYVPHHKPVVEDDIKRLEDFLLSKPNVLVLTGAGISTESGIPDYRSEGVGLYARSNHKPVQHMEFVKSSAVRKRYWARNFVGWPKFSATQPNATHHALARFEREERVQAVVTQNVDRLHTKAGSRNVVEVHGSGYVVKCLSCEYRIDRHEFQSILASLNPAFKDAPDMIRPDGDVEIPLEYIENFRIPECTQCGGDLKPEIVFFGDSVPRPRVDQIAGMVYNSDGLLVLGSSLLVFSGYRVVLQTKDLKLPVGIVNIGETRADHLADIKISAKCGDVIPKLFDFRNSKSVS.

Residues 1–16 constitute a mitochondrion transit peptide; it reads MRVGQLLRFRSTSLRS. The 285-residue stretch at 28–312 folds into the Deacetylase sirtuin-type domain; that stretch reads KPVVEDDIKR…FDFRNSKSVS (285 aa). NAD(+)-binding positions include 53–73 and 134–137; these read GAGISTESGIPDYRSEGVGLY and QNVD. Residue histidine 152 is the Proton acceptor of the active site. Cysteine 160, cysteine 163, cysteine 211, and cysteine 214 together coordinate Zn(2+). Residues 251-253, 277-279, and cysteine 295 each bind NAD(+); these read GSS and NIG.

It belongs to the sirtuin family. Class II subfamily. Zn(2+) is required as a cofactor.

The protein resides in the mitochondrion matrix. The catalysed reaction is N(6)-acetyl-L-lysyl-[protein] + NAD(+) + H2O = 2''-O-acetyl-ADP-D-ribose + nicotinamide + L-lysyl-[protein]. In terms of biological role, NAD-dependent protein deacylase. Catalyzes the NAD-dependent hydrolysis of acyl groups from lysine residues. The polypeptide is NAD-dependent protein deacylase Sirt4 (Sirt4) (Drosophila melanogaster (Fruit fly)).